A 393-amino-acid chain; its full sequence is tRNA (guanine-N(7)-)-methyltransferase (393 aa).

The S-adenosyl-L-methionine site is built by Glu-124, Glu-149, and Asp-176. Asp-232 provides a ligand contact to substrate.

This sequence belongs to the class I-like SAM-binding methyltransferase superfamily. TrmB family.

It carries out the reaction guanosine(46) in tRNA + S-adenosyl-L-methionine = N(7)-methylguanosine(46) in tRNA + S-adenosyl-L-homocysteine. Its pathway is tRNA modification; N(7)-methylguanine-tRNA biosynthesis. In terms of biological role, catalyzes the formation of N(7)-methylguanine at position 46 (m7G46) in tRNA. This chain is tRNA (guanine-N(7)-)-methyltransferase, found in Helicobacter pylori (strain ATCC 700392 / 26695) (Campylobacter pylori).